The primary structure comprises 188 residues: Large ribosomal subunit protein eL18B (188 aa).

A disordered region spans residues Gly153–Asn188. Over residues Arg178–Asn188 the composition is skewed to basic residues.

This sequence belongs to the eukaryotic ribosomal protein eL18 family. In terms of assembly, component of the large ribosomal subunit.

Its subcellular location is the cytoplasm. The protein resides in the cytosol. It is found in the rough endoplasmic reticulum. In terms of biological role, component of the large ribosomal subunit. The ribosome is a large ribonucleoprotein complex responsible for the synthesis of proteins in the cell. The polypeptide is Large ribosomal subunit protein eL18B (rpl18-b) (Xenopus laevis (African clawed frog)).